The primary structure comprises 453 residues: Serine/threonine-protein phosphatase 2A 55 kDa regulatory subunit B delta isoform (453 aa).

WD repeat units follow at residues 32 to 71 (AEAD…KSRP), 97 to 138 (EIEE…KRAE), 181 to 219 (AHTY…RSFN), and 230 to 270 (ELTE…LCDR). Residue Ser-285 is modified to Phosphoserine. WD repeat units lie at residues 289 to 327 (EIIS…RPVE), 344 to 385 (ENDC…DVTL), and 420 to 452 (DFNK…QDKI). Phosphotyrosine is present on Tyr-305. At Thr-308 the chain carries Phosphothreonine.

Belongs to the phosphatase 2A regulatory subunit B family. In terms of assembly, PP2A consists of a common heterodimeric core enzyme, composed of a 36 kDa catalytic subunit (subunit C) and a 65 kDa constant regulatory subunit (PR65 or subunit A), that associates with a variety of regulatory subunits. Proteins that associate with the core dimer include three families of regulatory subunits B (the R2/B/PR55/B55, R3/B''/PR72/PR130/PR59 and R5/B'/B56 families), the 48 kDa variable regulatory subunit, viral proteins, and cell signaling molecules. Interacts with ENSA (when phosphorylated at 'Ser-67') and ARPP19 (when phosphorylated at 'Ser-62'), leading to inhibit PP2A activity. Interacts with IER5.

The protein resides in the cytoplasm. In terms of biological role, substrate-recognition subunit of protein phosphatase 2A (PP2A) that plays a key role in cell cycle by controlling mitosis entry and exit. Involved in chromosome clustering during late mitosis by mediating dephosphorylation of MKI67. The activity of PP2A complexes containing PPP2R2D (PR55-delta) fluctuate during the cell cycle: the activity is high in interphase and low in mitosis. The protein is Serine/threonine-protein phosphatase 2A 55 kDa regulatory subunit B delta isoform (PPP2R2D) of Homo sapiens (Human).